Here is a 152-residue protein sequence, read N- to C-terminus: D-aminoacyl-tRNA deacylase (152 aa).

A Gly-cisPro motif, important for rejection of L-amino acids motif is present at residues 137–138 (GP).

The protein belongs to the DTD family. In terms of assembly, homodimer.

Its subcellular location is the cytoplasm. The enzyme catalyses glycyl-tRNA(Ala) + H2O = tRNA(Ala) + glycine + H(+). It catalyses the reaction a D-aminoacyl-tRNA + H2O = a tRNA + a D-alpha-amino acid + H(+). In terms of biological role, an aminoacyl-tRNA editing enzyme that deacylates mischarged D-aminoacyl-tRNAs. Also deacylates mischarged glycyl-tRNA(Ala), protecting cells against glycine mischarging by AlaRS. Acts via tRNA-based rather than protein-based catalysis; rejects L-amino acids rather than detecting D-amino acids in the active site. By recycling D-aminoacyl-tRNA to D-amino acids and free tRNA molecules, this enzyme counteracts the toxicity associated with the formation of D-aminoacyl-tRNA entities in vivo and helps enforce protein L-homochirality. In Methylibium petroleiphilum (strain ATCC BAA-1232 / LMG 22953 / PM1), this protein is D-aminoacyl-tRNA deacylase.